The sequence spans 372 residues: Protein zntB (372 aa).

The next 3 helical transmembrane spans lie at Leu15–Ile35, Leu42–Leu62, and Ile70–Leu90. Positions Glu99–Ser166 are disordered. Positions Ile114–Val124 are enriched in basic and acidic residues. The stretch at Asn133–Lys167 forms a coiled coil. Residues Lys137–Gln146 are compositionally biased toward basic residues. The span at Gln147–Lys159 shows a compositional bias: low complexity. A run of 5 helical transmembrane segments spans residues Tyr170–Ala192, Leu207–Ala229, Phe237–Ile257, Leu271–Phe291, and Phe301–Leu321. A disordered region spans residues Ala328–Ala372. Residues Gly334 to Gly352 show a composition bias toward basic residues. A compositionally biased stretch (polar residues) spans Val360–Ala372.

The protein belongs to the ZIP transporter (TC 2.A.5) family. ZupT subfamily.

The protein resides in the membrane. May transport divalent cations. May participate, with dstA, in the regulation of the differentiation of stalk cells during development. This chain is Protein zntB (zntB), found in Dictyostelium discoideum (Social amoeba).